A 561-amino-acid polypeptide reads, in one-letter code: SUN domain-containing protein 5 (561 aa).

Residues glycine 36–valine 56 form a helical membrane-spanning segment. The SUN domain maps to asparagine 158 to alanine 318. The interval alanine 345–alanine 367 is disordered. Residues methionine 454 to lysine 499 are a coiled coil. 2 consecutive transmembrane segments (helical) span residues leucine 501 to threonine 521 and proline 540 to leucine 560.

In terms of assembly, forms homomers. Interacts with SUN3 and TIK.

It localises to the membrane. Its function is as follows. Encodes a member of the mid-SUN subfamily of SUN-domain proteins. It is involved in early seed development and nuclear morphology. [TAIR]. The protein is SUN domain-containing protein 5 of Arabidopsis thaliana (Mouse-ear cress).